A 123-amino-acid chain; its full sequence is Large ribosomal subunit protein uL14 (123 aa).

It belongs to the universal ribosomal protein uL14 family. Part of the 50S ribosomal subunit. Forms a cluster with proteins L3 and L19. In the 70S ribosome, L14 and L19 interact and together make contacts with the 16S rRNA in bridges B5 and B8.

Functionally, binds to 23S rRNA. Forms part of two intersubunit bridges in the 70S ribosome. This chain is Large ribosomal subunit protein uL14, found in Blochmanniella pennsylvanica (strain BPEN).